Here is a 322-residue protein sequence, read N- to C-terminus: Dirigent protein 9 (322 aa).

The first 20 residues, 1 to 20, serve as a signal peptide directing secretion; sequence MAKALHITIFLFLISSNLLA.

It belongs to the plant dirigent protein family. In terms of assembly, homodimer.

It localises to the secreted. The protein resides in the extracellular space. Its subcellular location is the apoplast. In terms of biological role, dirigent proteins impart stereoselectivity on the phenoxy radical-coupling reaction, yielding optically active lignans from two molecules of coniferyl alcohol in the biosynthesis of lignans, flavonolignans, and alkaloids and thus plays a central role in plant secondary metabolism. This chain is Dirigent protein 9 (DIR9), found in Arabidopsis thaliana (Mouse-ear cress).